Reading from the N-terminus, the 128-residue chain is Sulfurtransferase TusD (128 aa).

C78 acts as the Cysteine persulfide intermediate in catalysis.

This sequence belongs to the DsrE/TusD family. As to quaternary structure, heterohexamer, formed by a dimer of trimers. The hexameric TusBCD complex contains 2 copies each of TusB, TusC and TusD. The TusBCD complex interacts with TusE.

The protein resides in the cytoplasm. Its function is as follows. Part of a sulfur-relay system required for 2-thiolation of 5-methylaminomethyl-2-thiouridine (mnm(5)s(2)U) at tRNA wobble positions. Accepts sulfur from TusA and transfers it in turn to TusE. This is Sulfurtransferase TusD from Citrobacter koseri (strain ATCC BAA-895 / CDC 4225-83 / SGSC4696).